The primary structure comprises 353 residues: Protein RecA (353 aa).

67–74 (GPESSGKT) lines the ATP pocket.

This sequence belongs to the RecA family.

It localises to the cytoplasm. Its function is as follows. Can catalyze the hydrolysis of ATP in the presence of single-stranded DNA, the ATP-dependent uptake of single-stranded DNA by duplex DNA, and the ATP-dependent hybridization of homologous single-stranded DNAs. It interacts with LexA causing its activation and leading to its autocatalytic cleavage. This chain is Protein RecA, found in Salmonella agona (strain SL483).